The primary structure comprises 247 residues: ATP synthase subunit a, chloroplastic (247 aa).

A run of 5 helical transmembrane segments spans residues 38–58 (QVLI…TLAV), 95–115 (VPFI…GALL), 134–154 (INTT…AGLS), 199–219 (LVVV…VMFL), and 220–240 (GLFT…AYIG).

Belongs to the ATPase A chain family. In terms of assembly, F-type ATPases have 2 components, CF(1) - the catalytic core - and CF(0) - the membrane proton channel. CF(1) has five subunits: alpha(3), beta(3), gamma(1), delta(1), epsilon(1). CF(0) has four main subunits: a, b, b' and c.

It is found in the plastid. Its subcellular location is the chloroplast thylakoid membrane. Its function is as follows. Key component of the proton channel; it plays a direct role in the translocation of protons across the membrane. The sequence is that of ATP synthase subunit a, chloroplastic from Lactuca sativa (Garden lettuce).